Consider the following 154-residue polypeptide: Ubiquitin-like protein 4A-A (154 aa).

Residues 1-76 (MILTVKPLQG…LNLVVRPAGE (76 aa)) form the Ubiquitin-like domain.

As to quaternary structure, component of the BAT3 complex.

The protein resides in the cytoplasm. It localises to the cytosol. Component of the BAT3 complex, a multiprotein complex involved in the post-translational delivery of tail-anchored (TA) membrane proteins to the endoplasmic reticulum membrane. TA membrane proteins, also named type II transmembrane proteins, contain a single C-terminal transmembrane region. The chain is Ubiquitin-like protein 4A-A (ubl4aa) from Oncorhynchus mykiss (Rainbow trout).